The following is a 263-amino-acid chain: Homeobox protein CDX-1 (263 aa).

The disordered stretch occupies residues 47–108 (PGINSDPHHG…VQPPGSGLLP (62 aa)). Residues 82–97 (SSANPTQIAFSPSDYN) are compositionally biased toward polar residues. The segment at residues 150–209 (KDKYRVVYTDHQRLELEKEFHYSRYITIRRKAELAAALGLTERQVKIWFQNRRAKERKVN) is a DNA-binding region (homeobox). Residues 153–174 (YRVVYTDHQRLELEKEFHYSRY) form an interaction with DNA region. The interval 192–203 (RQVKIWFQNRRA) is interaction with 5-mCpG DNA. Over residues 204-213 (KERKVNKKKM) the composition is skewed to basic residues. A disordered region spans residues 204 to 263 (KERKVNKKKMQQQSQQASTTTPTPPSVGTTAGMGGLCSSSSSNSNLVSPSSMPIKEEYLS). Composition is skewed to low complexity over residues 214–233 (QQQS…VGTT) and 241–254 (SSSS…SPSS).

This sequence belongs to the Caudal homeobox family.

It is found in the nucleus. In terms of biological role, plays a role in transcriptional regulation. Involved in activated KRAS-mediated transcriptional activation of PRKD1. Binds to the PRKD1 promoter. Could play a role in the terminal differentiation of the intestine. Binds preferentially to methylated DNA. This is Homeobox protein CDX-1 (cdx1) from Xenopus laevis (African clawed frog).